We begin with the raw amino-acid sequence, 507 residues long: Sugar transport protein 6 (507 aa).

Residues 1-20 are Cytoplasmic-facing; it reads MAVVVSNANAPAFEAKMTVY. 12 helical membrane-spanning segments follow: residues 21–41, 78–98, 115–135, 138–158, 165–185, 199–219, 280–300, 318–338, 345–365, 381–401, 418–438, and 447–467; these read VFIC…DIGI, FLQL…FVAS, IFFL…MLII, LFLG…LSEI, GGLN…ANIV, IALG…LLII, FIIG…AIMF, LSAV…IYLV, FLLL…GIIL, LVVV…WGPL, GFAV…QAFL, and GIFF…FFFI. Over 468 to 507 the chain is Cytoplasmic; that stretch reads PETKGIAIDDMRESVWKPHWFWKRYMLPEDDHHDIEKRNA.

The protein belongs to the major facilitator superfamily. Sugar transporter (TC 2.A.1.1) family. As to expression, pollen specific.

The protein resides in the membrane. Inhibited by uncouplers such as 2,4-dinitrophenol and carbonyl cyanide-m-chlorophenyl-hydrazone. In terms of biological role, mediates an active uptake of hexoses, probably by sugar/hydrogen symport. Can transport glucose, 3-O-methylglucose, mannose, fructose and galactose, and, to a lower extent, xylose and ribulose. This Arabidopsis thaliana (Mouse-ear cress) protein is Sugar transport protein 6 (STP6).